A 426-amino-acid polypeptide reads, in one-letter code: Serine hydroxymethyltransferase (426 aa).

Residues Leu115 and 119–121 each bind (6S)-5,6,7,8-tetrahydrofolate; that span reads GHI. Position 225 is an N6-(pyridoxal phosphate)lysine (Lys225).

This sequence belongs to the SHMT family. Homodimer. The cofactor is pyridoxal 5'-phosphate.

It is found in the cytoplasm. It participates in amino-acid biosynthesis; glycine biosynthesis; glycine from L-serine: step 1/1. Its function is as follows. Catalyzes the reversible interconversion of serine and glycine with a modified folate serving as the one-carbon carrier. Also exhibits a pteridine-independent aldolase activity toward beta-hydroxyamino acids, producing glycine and aldehydes, via a retro-aldol mechanism. The polypeptide is Serine hydroxymethyltransferase (Thermoplasma acidophilum (strain ATCC 25905 / DSM 1728 / JCM 9062 / NBRC 15155 / AMRC-C165)).